A 188-amino-acid chain; its full sequence is Elongation factor P (188 aa).

Belongs to the elongation factor P family.

Its subcellular location is the cytoplasm. The protein operates within protein biosynthesis; polypeptide chain elongation. In terms of biological role, involved in peptide bond synthesis. Stimulates efficient translation and peptide-bond synthesis on native or reconstituted 70S ribosomes in vitro. Probably functions indirectly by altering the affinity of the ribosome for aminoacyl-tRNA, thus increasing their reactivity as acceptors for peptidyl transferase. In Chlorobium chlorochromatii (strain CaD3), this protein is Elongation factor P.